We begin with the raw amino-acid sequence, 908 residues long: PTS system glucose-specific EIICBA component (908 aa).

In terms of domain architecture, PTS EIIC type-1; first part spans Met-1–Gly-264. 5 helical membrane-spanning segments follow: residues Leu-31–Ile-51, Gly-71–Phe-91, Phe-100–Val-120, Val-155–Ile-175, and Phe-189–Trp-209. The unknown stretch occupies residues Gly-265–Ser-450. In terms of domain architecture, PTS EIIC type-1; second part spans Leu-451–Gly-602. A run of 5 helical transmembrane segments spans residues Gly-459–Ala-479, Ala-487–Phe-507, Phe-509–Val-529, Leu-536–Gly-556, and Val-571–Ile-591. Residues Gln-631–Trp-713 form the PTS EIIB type-1 domain. Cys-653 serves as the catalytic Phosphocysteine intermediate; for EIIB activity. Residues Asp-762–Gln-875 enclose the PTS EIIA type-1 domain. Catalysis depends on His-815, which acts as the Tele-phosphohistidine intermediate; for EIIA activity.

Its subcellular location is the cell membrane. The catalysed reaction is N(pros)-phospho-L-histidyl-[protein] + D-glucose(out) = D-glucose 6-phosphate(in) + L-histidyl-[protein]. Its function is as follows. The phosphoenolpyruvate-dependent sugar phosphotransferase system (sugar PTS), a major carbohydrate active transport system, catalyzes the phosphorylation of incoming sugar substrates concomitantly with their translocation across the cell membrane. This system is involved in glucose transport. In Mycoplasma genitalium (strain ATCC 33530 / DSM 19775 / NCTC 10195 / G37) (Mycoplasmoides genitalium), this protein is PTS system glucose-specific EIICBA component (ptsG).